We begin with the raw amino-acid sequence, 269 residues long: Expansin-A32 (269 aa).

An N-terminal signal peptide occupies residues 1–25 (MWCTWALGRVVLAVVFLVALAAGDA). In terms of domain architecture, Expansin-like EG45 spans 60 to 174 (DGACGYKDTS…RRVPCVKVGG (115 aa)). The Expansin-like CBD domain occupies 184-264 (YFNLVMVSNV…DWQFGVTYQA (81 aa)).

It belongs to the expansin family. Expansin A subfamily.

It localises to the secreted. The protein resides in the cell wall. The protein localises to the membrane. Functionally, may cause loosening and extension of plant cell walls by disrupting non-covalent bonding between cellulose microfibrils and matrix glucans. No enzymatic activity has been found. May be required for rapid internodal elongation in deepwater rice during submergence. The protein is Expansin-A32 (EXPA32) of Oryza sativa subsp. japonica (Rice).